A 313-amino-acid chain; its full sequence is Ribosomal RNA small subunit methyltransferase H (313 aa).

Residues 35 to 37 (GGH), Asp-55, Phe-79, Asp-101, and Gln-108 each bind S-adenosyl-L-methionine. Residues 276–300 (QGGPTLKSVGKMMPPDDEVADNPRA) form a disordered region.

This sequence belongs to the methyltransferase superfamily. RsmH family.

The protein localises to the cytoplasm. The catalysed reaction is cytidine(1402) in 16S rRNA + S-adenosyl-L-methionine = N(4)-methylcytidine(1402) in 16S rRNA + S-adenosyl-L-homocysteine + H(+). Its function is as follows. Specifically methylates the N4 position of cytidine in position 1402 (C1402) of 16S rRNA. The protein is Ribosomal RNA small subunit methyltransferase H of Dickeya chrysanthemi (strain Ech1591) (Dickeya zeae (strain Ech1591)).